Reading from the N-terminus, the 775-residue chain is WD repeat-containing protein pop1 (775 aa).

One can recognise an F-box domain in the interval 298-345 (KNFLTGFPAEITNLVLTHLDAPSLCAVSQVSHHWYKLVSSNEELWKSL). 5 WD repeats span residues 444–472 (EHEGDVWTFEYVGDTLVTGSTDRTVRVWD), 484–538 (GHTS…RLWS), 575–603 (GHTDSVREVACLGDLIVSASYDGTLRVWK), 615–645 (GHVGRVYSVTINPSRQQCISAGTDAKIRIWN), and 657–687 (GHSNLVSQVTFNQNILVSASAPPDTSLRVWD).

As to quaternary structure, homodimer and heterodimer with pop2. Binds to cdc18, phosphorylated cig2, cul1, pip1 and skp1.

Its subcellular location is the nucleus. Involved in maintenance of ploidy through proteasome dependent degradation of CDK inhibitor rum1 and S-phase initiator cdc18. Functions as a recognition factor for rum1 and cdc18, which are subsequently ubiquitinated and targeted to the 26S proteasome for degradation. Together with pop2, required for cig2 instability during G2 and M phase and cig2 degradation in exponentially growing cells. Regulates cell-cycle progression under starvation through the rum1 protein. The protein is WD repeat-containing protein pop1 (pop1) of Schizosaccharomyces pombe (strain 972 / ATCC 24843) (Fission yeast).